Here is a 490-residue protein sequence, read N- to C-terminus: Glutamyl-tRNA(Gln) amidotransferase subunit A (490 aa).

Active-site charge relay system residues include lysine 78 and serine 159. Catalysis depends on serine 183, which acts as the Acyl-ester intermediate.

This sequence belongs to the amidase family. GatA subfamily. In terms of assembly, heterotrimer of A, B and C subunits.

It catalyses the reaction L-glutamyl-tRNA(Gln) + L-glutamine + ATP + H2O = L-glutaminyl-tRNA(Gln) + L-glutamate + ADP + phosphate + H(+). Allows the formation of correctly charged Gln-tRNA(Gln) through the transamidation of misacylated Glu-tRNA(Gln) in organisms which lack glutaminyl-tRNA synthetase. The reaction takes place in the presence of glutamine and ATP through an activated gamma-phospho-Glu-tRNA(Gln). This chain is Glutamyl-tRNA(Gln) amidotransferase subunit A, found in Paramagnetospirillum magneticum (strain ATCC 700264 / AMB-1) (Magnetospirillum magneticum).